Reading from the N-terminus, the 245-residue chain is 1-(5-phosphoribosyl)-5-[(5-phosphoribosylamino)methylideneamino] imidazole-4-carboxamide isomerase (245 aa).

Asp8 serves as the catalytic Proton acceptor. Asp129 functions as the Proton donor in the catalytic mechanism.

This sequence belongs to the HisA/HisF family.

Its subcellular location is the cytoplasm. It carries out the reaction 1-(5-phospho-beta-D-ribosyl)-5-[(5-phospho-beta-D-ribosylamino)methylideneamino]imidazole-4-carboxamide = 5-[(5-phospho-1-deoxy-D-ribulos-1-ylimino)methylamino]-1-(5-phospho-beta-D-ribosyl)imidazole-4-carboxamide. Its pathway is amino-acid biosynthesis; L-histidine biosynthesis; L-histidine from 5-phospho-alpha-D-ribose 1-diphosphate: step 4/9. The sequence is that of 1-(5-phosphoribosyl)-5-[(5-phosphoribosylamino)methylideneamino] imidazole-4-carboxamide isomerase from Heliobacterium modesticaldum (strain ATCC 51547 / Ice1).